A 175-amino-acid chain; its full sequence is ATP synthase subunit b (175 aa).

A helical transmembrane segment spans residues 13–33; the sequence is LLSPNPGLIFWTAVTFLLLLL.

This sequence belongs to the ATPase B chain family. F-type ATPases have 2 components, F(1) - the catalytic core - and F(0) - the membrane proton channel. F(1) has five subunits: alpha(3), beta(3), gamma(1), delta(1), epsilon(1). F(0) has four main subunits: a(1), b(2) and c(10-14). The alpha and beta chains form an alternating ring which encloses part of the gamma chain. F(1) is attached to F(0) by a central stalk formed by the gamma and epsilon chains, while a peripheral stalk is formed by the delta and b chains.

Its subcellular location is the cell inner membrane. F(1)F(0) ATP synthase produces ATP from ADP in the presence of a proton or sodium gradient. F-type ATPases consist of two structural domains, F(1) containing the extramembraneous catalytic core and F(0) containing the membrane proton channel, linked together by a central stalk and a peripheral stalk. During catalysis, ATP synthesis in the catalytic domain of F(1) is coupled via a rotary mechanism of the central stalk subunits to proton translocation. In terms of biological role, component of the F(0) channel, it forms part of the peripheral stalk, linking F(1) to F(0). This is ATP synthase subunit b from Chloroherpeton thalassium (strain ATCC 35110 / GB-78).